The chain runs to 249 residues: Phosphomannomutase 2 (249 aa).

Asp-12 functions as the Nucleophile in the catalytic mechanism. Positions 12 and 14 each coordinate Mg(2+). Asp-14 acts as the Proton donor/acceptor in catalysis. Residues Arg-21, Arg-123, Arg-134, Arg-141, Ser-179, and Asp-181 each coordinate alpha-D-mannose 1-phosphate. Asp-209 is a binding site for Mg(2+).

This sequence belongs to the eukaryotic PMM family. As to quaternary structure, homodimer.

Its subcellular location is the cytoplasm. The catalysed reaction is alpha-D-mannose 1-phosphate = D-mannose 6-phosphate. It functions in the pathway nucleotide-sugar biosynthesis; GDP-alpha-D-mannose biosynthesis; alpha-D-mannose 1-phosphate from D-fructose 6-phosphate: step 2/2. Involved in the synthesis of the GDP-mannose and dolichol-phosphate-mannose required for a number of critical mannosyl transfer reactions. The protein is Phosphomannomutase 2 (pmmB) of Dictyostelium discoideum (Social amoeba).